Reading from the N-terminus, the 337-residue chain is Cytoskeleton protein RodZ (337 aa).

Residues 1 to 111 (MNTEATHDQN…LGKRRKKRDG (111 aa)) are Cytoplasmic-facing. The HTH cro/C1-type domain occupies 19–71 (LRNAREQLGLSQQAVAERLCLKVSTVRDIEEDKAPADLASTFLRGYIRSYARL). A DNA-binding region (H-T-H motif) is located at residues 30-49 (QQAVAERLCLKVSTVRDIEE). Residues 112-132 (WLMTFTWLVLFVVIGLSGAWW) traverse the membrane as a helical; Signal-anchor for type II membrane protein segment. Residues 133-337 (WQDHKAQQEE…TLNAEQSPAQ (205 aa)) lie on the Periplasmic side of the membrane. Polar residues predominate over residues 145–167 (TMADQSSAELSSNSEQGQSVPLN). The interval 145–236 (TMADQSSAEL…TAATTPDGAA (92 aa)) is disordered. Low complexity predominate over residues 168 to 207 (TSTTTDPATTSTPPASVDTTATNTQTPVVTAPAPAVDPQQ). The span at 208–218 (NAVVSPSQANV) shows a compositional bias: polar residues. Residues 219–236 (DTAATPAPTAATTPDGAA) are compositionally biased toward low complexity.

This sequence belongs to the RodZ family.

It localises to the cell inner membrane. Functionally, cytoskeletal protein that is involved in cell-shape control through regulation of the length of the long axis. The polypeptide is Cytoskeleton protein RodZ (Escherichia coli O157:H7).